Consider the following 427-residue polypeptide: 3-phosphoshikimate 1-carboxyvinyltransferase (427 aa).

3-phosphoshikimate is bound by residues lysine 20, serine 21, and arginine 25. Lysine 20 provides a ligand contact to phosphoenolpyruvate. The phosphoenolpyruvate site is built by glycine 90 and arginine 118. The 3-phosphoshikimate site is built by serine 163, serine 164, glutamine 165, serine 191, aspartate 309, and lysine 336. Phosphoenolpyruvate is bound at residue glutamine 165. Catalysis depends on aspartate 309, which acts as the Proton acceptor. Residues arginine 340 and arginine 381 each coordinate phosphoenolpyruvate.

The protein belongs to the EPSP synthase family. Monomer.

It is found in the cytoplasm. It carries out the reaction 3-phosphoshikimate + phosphoenolpyruvate = 5-O-(1-carboxyvinyl)-3-phosphoshikimate + phosphate. Its pathway is metabolic intermediate biosynthesis; chorismate biosynthesis. Functionally, catalyzes the transfer of the enolpyruvyl moiety of phosphoenolpyruvate (PEP) to the 5-hydroxyl of shikimate-3-phosphate (S3P) to produce enolpyruvyl shikimate-3-phosphate and inorganic phosphate. This chain is 3-phosphoshikimate 1-carboxyvinyltransferase, found in Methanococcoides burtonii (strain DSM 6242 / NBRC 107633 / OCM 468 / ACE-M).